A 193-amino-acid polypeptide reads, in one-letter code: Thymidine kinase (193 aa).

Position 9 to 16 (A9 to S16) interacts with ATP.

This sequence belongs to the thymidine kinase family.

The enzyme catalyses thymidine + ATP = dTMP + ADP + H(+). This thymidine kinase is one of the enzymes that catalyze DNA precursor synthesis. Although tk is a nonessential gene, some strains of host E.coli do not support the growth of phages that lack this gene. The protein is Thymidine kinase (TK) of Escherichia coli (Bacteriophage T4).